Consider the following 905-residue polypeptide: Probable aromatic-L-amino-acid decarboxylase (905 aa).

Residues 250–296 form a disordered region; sequence YLNPIIKTPPHNERVPKMKTNISKTRKKKGKVSDASKDSRPSETKKE. The segment covering 280–296 has biased composition (basic and acidic residues); sequence KVSDASKDSRPSETKKE. The pyridoxal 5'-phosphate site is built by threonine 492 and serine 591. Lysine 648 is modified (N6-(pyridoxal phosphate)lysine). The disordered stretch occupies residues 861-905; that stretch reads HTAEYADPPGKSNKSPQVAAKGELPSAAPPSSRTPNSDISEKSDR. Positions 889–898 are enriched in polar residues; that stretch reads PPSSRTPNSD.

Belongs to the group II decarboxylase family. As to quaternary structure, homodimer. It depends on pyridoxal 5'-phosphate as a cofactor.

The catalysed reaction is L-dopa + H(+) = dopamine + CO2. The enzyme catalyses 5-hydroxy-L-tryptophan + H(+) = serotonin + CO2. The protein operates within catecholamine biosynthesis; dopamine biosynthesis; dopamine from L-tyrosine: step 2/2. Functionally, catalyzes the decarboxylation of L-3,4-dihydroxyphenylalanine (DOPA) to dopamine, L-5-hydroxytryptophan to serotonin and L-tryptophan to tryptamine. The chain is Probable aromatic-L-amino-acid decarboxylase (hdl-1) from Caenorhabditis elegans.